A 140-amino-acid chain; its full sequence is uncharacterized protein (140 aa).

This sequence belongs to the MG067/MG068/MG395 family.

This is an uncharacterized protein from Mycoplasma pneumoniae (strain ATCC 29342 / M129 / Subtype 1) (Mycoplasmoides pneumoniae).